Reading from the N-terminus, the 544-residue chain is Chaperonin GroEL (544 aa).

ATP contacts are provided by residues 29 to 32 (TLGP), lysine 50, 86 to 90 (DGTTT), glycine 414, 477 to 479 (DAA), and aspartate 493.

It belongs to the chaperonin (HSP60) family. In terms of assembly, forms a cylinder of 14 subunits composed of two heptameric rings stacked back-to-back. Interacts with the co-chaperonin GroES.

Its subcellular location is the cytoplasm. It carries out the reaction ATP + H2O + a folded polypeptide = ADP + phosphate + an unfolded polypeptide.. Its function is as follows. Together with its co-chaperonin GroES, plays an essential role in assisting protein folding. The GroEL-GroES system forms a nano-cage that allows encapsulation of the non-native substrate proteins and provides a physical environment optimized to promote and accelerate protein folding. The chain is Chaperonin GroEL from Hydrogenovibrio crunogenus (strain DSM 25203 / XCL-2) (Thiomicrospira crunogena).